The following is a 311-amino-acid chain: Ribonuclease HIII (311 aa).

Positions 95-311 constitute an RNase H type-2 domain; that stretch reads MSIVGSDEVG…NTEKAFRLLK (217 aa). A divalent metal cation-binding residues include aspartate 101, glutamate 102, and aspartate 206.

This sequence belongs to the RNase HII family. RnhC subfamily. The cofactor is Mn(2+). It depends on Mg(2+) as a cofactor.

The protein localises to the cytoplasm. It catalyses the reaction Endonucleolytic cleavage to 5'-phosphomonoester.. In terms of biological role, endonuclease that specifically degrades the RNA of RNA-DNA hybrids. The protein is Ribonuclease HIII of Bacillus anthracis (strain A0248).